Consider the following 504-residue polypeptide: UDP-glycosyltransferase UGT4 (504 aa).

A signal peptide spans 1-23 (MTLLRDLLLLYINSLLFINPSIG). Over 24–474 (ENILVFLPTK…SAVIDLYWFQ (451 aa)) the chain is Lumenal. 4 N-linked (GlcNAc...) asparagine glycosylation sites follow: N54, N66, N69, and N422. The helical transmembrane segment at 475–495 (YILLDIILFYSLIVLILLCIL) threads the bilayer. The Cytoplasmic segment spans residues 496-504 (RIFFRMLTK).

It belongs to the UDP-glycosyltransferase family.

The protein localises to the microsome membrane. In terms of biological role, catalyzes the transfer of a glycosyl group from a UDP-sugar to an acceptor molecule. This Dactylopius coccus (Cochineal) protein is UDP-glycosyltransferase UGT4.